An 855-amino-acid chain; its full sequence is Pre-mRNA-splicing factor SYF1 (855 aa).

9 HAT repeats span residues Leu15–Gly47, Ala48–Ala80, Pro90–Asp122, Gly124–Ser158, Pro160–Arg192, Gln198–Gln230, Val235–Arg268, Gly270–Ser305, and Gly369–Asp407. Position 420 is an N6-acetyllysine (Lys420). 5 HAT repeats span residues Gly498 to Glu530, Lys532 to Ser566, Arg571 to Glu605, Tyr643 to Lys677, and Gly679 to Arg713. Positions Ala808–Asp855 are disordered. A compositionally biased stretch (acidic residues) spans Gln820–Pro834. Ser851 carries the post-translational modification Phosphoserine.

Belongs to the crooked-neck family. Associates with RNA polymerase II, the TCR-specific proteins CKN1/CSA and ERCC6/CSB, and XPA. Identified in the spliceosome C complex. Component of the XAB2 complex, a multimeric protein complex composed of XAB2, PRPF19, AQR, ZNF830, ISY1, and PPIE. Identified in a pentameric intron-binding (IB) complex composed of AQR, XAB2, ISY1, ZNF830 and PPIE that is incorporated into the spliceosome as a preassembled complex. The IB complex does not contain PRPF19.

The protein localises to the nucleus. Involved in pre-mRNA splicing as component of the spliceosome. Involved in transcription-coupled repair (TCR), transcription and pre-mRNA splicing. The protein is Pre-mRNA-splicing factor SYF1 (Xab2) of Rattus norvegicus (Rat).